Consider the following 513-residue polypeptide: RNA-splicing ligase RtcB homolog (513 aa).

The Mn(2+) site is built by Asp127, Cys130, His235, His267, and His361. 234–238 is a binding site for GMP; that stretch reads NHYAE. GMP contacts are provided by residues 361-362, 410-413, Ser417, 436-439, and Lys512; these read HN, GGTM, and HGAG. His436 serves as the catalytic GMP-histidine intermediate.

It belongs to the RtcB family. As to quaternary structure, catalytic component of the tRNA-splicing ligase complex. Mn(2+) serves as cofactor.

The catalysed reaction is a 3'-end 3'-phospho-ribonucleotide-RNA + a 5'-end dephospho-ribonucleoside-RNA + GTP = a ribonucleotidyl-ribonucleotide-RNA + GMP + diphosphate. It carries out the reaction a 3'-end 2',3'-cyclophospho-ribonucleotide-RNA + a 5'-end dephospho-ribonucleoside-RNA + GTP + H2O = a ribonucleotidyl-ribonucleotide-RNA + GMP + diphosphate + H(+). Its function is as follows. Catalytic subunit of the tRNA-splicing ligase complex that acts by directly joining spliced tRNA halves to mature-sized tRNAs by incorporating the precursor-derived splice junction phosphate into the mature tRNA as a canonical 3',5'-phosphodiester. May act as an RNA ligase with broad substrate specificity, and may function toward other RNAs. The protein is RNA-splicing ligase RtcB homolog of Micromonas commoda (strain RCC299 / NOUM17 / CCMP2709) (Picoplanktonic green alga).